We begin with the raw amino-acid sequence, 307 residues long: UDP-N-acetylenolpyruvoylglucosamine reductase (307 aa).

Residues 34 to 199 (RVGGPAQVLF…TAVRFRGTPS (166 aa)) enclose the FAD-binding PCMH-type domain. Residue R179 is part of the active site. The active-site Proton donor is the S228. The active site involves E298.

It belongs to the MurB family. The cofactor is FAD.

It is found in the cytoplasm. The catalysed reaction is UDP-N-acetyl-alpha-D-muramate + NADP(+) = UDP-N-acetyl-3-O-(1-carboxyvinyl)-alpha-D-glucosamine + NADPH + H(+). It functions in the pathway cell wall biogenesis; peptidoglycan biosynthesis. In terms of biological role, cell wall formation. The chain is UDP-N-acetylenolpyruvoylglucosamine reductase from Bradyrhizobium sp. (strain ORS 278).